We begin with the raw amino-acid sequence, 393 residues long: MTYEVLEQINAMADDIFAEGIEAERIGRVADDTAKKMKAIGSIRMLQPKEHGGMEAHPREFAETVMRMASLNPSAGWVHGIVGVHPWQLAFADPKVQQEIWGSDPDTWMASPYMPGGMCIPTDGGYKFSGRWQFSSGTDHCDWAFLGAMACDKDGNMEMPPRMLHVIIPRTDYEIIEDSWDVMGLRGTGSKDLVVKDAYVPDYRVMDCDEVIDGTAVRKYGRTETLYLMPWSNMFPLGITAATIGICEGMLFHANEYQAGRINAQGTAVKDDPYTLFAIGQATADIRAARDTLLANVDRMWDRVDAGKEVTFEQRAEGRQTQVQAAWRAINAIDQVYPRCGGNALRMDKPLQRFWRDAHAGQHHAIHVPGTVFHAASLSRLGADPQGPLRAMI.

Its function is as follows. Involved in pigment production acting as a hydroxylase that transforms indole to indoxyl, resulting in the formation of indigo. The chain is Pigment production hydroxylase from Rhodococcus erythropolis (Arthrobacter picolinophilus).